A 651-amino-acid chain; its full sequence is Mediator of RNA polymerase II transcription subunit 17 (651 aa).

The interval 51–83 is disordered; sequence QGSGSEEEEAAGTEGDAQEWPGAGSSADQDDEE.

It belongs to the Mediator complex subunit 17 family. As to quaternary structure, interacts with GATA1 and PPARG. Component of the Mediator complex, which is composed of MED1, MED4, MED6, MED7, MED8, MED9, MED10, MED11, MED12, MED13, MED13L, MED14, MED15, MED16, MED17, MED18, MED19, MED20, MED21, MED22, MED23, MED24, MED25, MED26, MED27, MED29, MED30, MED31, CCNC, CDK8 and CDC2L6/CDK11. The MED12, MED13, CCNC and CDK8 subunits form a distinct module termed the CDK8 module. Mediator containing the CDK8 module is less active than Mediator lacking this module in supporting transcriptional activation. Individual preparations of the Mediator complex lacking one or more distinct subunits have been variously termed ARC, CRSP, DRIP, PC2, SMCC and TRAP. Interacts with STAT2. Ubiquitous.

The protein localises to the nucleus. Its function is as follows. Component of the Mediator complex, a coactivator involved in the regulated transcription of nearly all RNA polymerase II-dependent genes. Mediator functions as a bridge to convey information from gene-specific regulatory proteins to the basal RNA polymerase II transcription machinery. Mediator is recruited to promoters by direct interactions with regulatory proteins and serves as a scaffold for the assembly of a functional preinitiation complex with RNA polymerase II and the general transcription factors. This Homo sapiens (Human) protein is Mediator of RNA polymerase II transcription subunit 17 (MED17).